A 513-amino-acid polypeptide reads, in one-letter code: ATP synthase subunit alpha (513 aa).

ATP is bound at residue 169 to 176 (GDRQTGKT).

Belongs to the ATPase alpha/beta chains family. As to quaternary structure, F-type ATPases have 2 components, CF(1) - the catalytic core - and CF(0) - the membrane proton channel. CF(1) has five subunits: alpha(3), beta(3), gamma(1), delta(1), epsilon(1). CF(0) has three main subunits: a(1), b(2) and c(9-12). The alpha and beta chains form an alternating ring which encloses part of the gamma chain. CF(1) is attached to CF(0) by a central stalk formed by the gamma and epsilon chains, while a peripheral stalk is formed by the delta and b chains.

Its subcellular location is the cell inner membrane. The enzyme catalyses ATP + H2O + 4 H(+)(in) = ADP + phosphate + 5 H(+)(out). Produces ATP from ADP in the presence of a proton gradient across the membrane. The alpha chain is a regulatory subunit. The protein is ATP synthase subunit alpha of Thiobacillus denitrificans (strain ATCC 25259 / T1).